A 318-amino-acid chain; its full sequence is Transaldolase (318 aa).

Lysine 132 functions as the Schiff-base intermediate with substrate in the catalytic mechanism.

This sequence belongs to the transaldolase family. Type 1 subfamily. As to quaternary structure, homodimer.

The protein localises to the cytoplasm. It catalyses the reaction D-sedoheptulose 7-phosphate + D-glyceraldehyde 3-phosphate = D-erythrose 4-phosphate + beta-D-fructose 6-phosphate. It participates in carbohydrate degradation; pentose phosphate pathway; D-glyceraldehyde 3-phosphate and beta-D-fructose 6-phosphate from D-ribose 5-phosphate and D-xylulose 5-phosphate (non-oxidative stage): step 2/3. Functionally, transaldolase is important for the balance of metabolites in the pentose-phosphate pathway. The sequence is that of Transaldolase from Shewanella loihica (strain ATCC BAA-1088 / PV-4).